The primary structure comprises 437 residues: Methylenetetrahydrofolate--tRNA-(uracil-5-)-methyltransferase TrmFO (437 aa).

Position 8–13 (8–13) interacts with FAD; that stretch reads GAGLAG.

It belongs to the MnmG family. TrmFO subfamily. Requires FAD as cofactor.

The protein localises to the cytoplasm. It carries out the reaction uridine(54) in tRNA + (6R)-5,10-methylene-5,6,7,8-tetrahydrofolate + NADH + H(+) = 5-methyluridine(54) in tRNA + (6S)-5,6,7,8-tetrahydrofolate + NAD(+). The enzyme catalyses uridine(54) in tRNA + (6R)-5,10-methylene-5,6,7,8-tetrahydrofolate + NADPH + H(+) = 5-methyluridine(54) in tRNA + (6S)-5,6,7,8-tetrahydrofolate + NADP(+). In terms of biological role, catalyzes the folate-dependent formation of 5-methyl-uridine at position 54 (M-5-U54) in all tRNAs. This Desulfitobacterium hafniense (strain Y51) protein is Methylenetetrahydrofolate--tRNA-(uracil-5-)-methyltransferase TrmFO.